Consider the following 304-residue polypeptide: L-xylo-3-hexulose reductase (304 aa).

NADP(+) contacts are provided by Ile-19, Asp-68, and Asn-107. Active-site proton donor residues include Ser-163 and Ser-164. Tyr-177, Lys-181, and Ala-209 together coordinate NADP(+). Residue Tyr-177 is the Proton acceptor of the active site. Residue Lys-181 is the Lowers pKa of active site Tyr of the active site.

Belongs to the short-chain dehydrogenases/reductases (SDR) family.

The catalysed reaction is D-sorbitol + NADP(+) = L-xylo-3-hexulose + NADPH + H(+). It participates in carbohydrate degradation. Its function is as follows. L-xylulose reductase involved in the catabolism of D-galactose through an oxidoreductive pathway. Catalyzes the NADPH-dependent reduction of L-xylo-3-hexulose. Is also active with D-ribulose and L-xylulose, and to a lesser extent with D-xylulose, D-fructose and L- and D-sorbose. In the reverse reaction, shows activity with D-sorbitol and D-mannitol, low activity with xylitol, but no activity with galactitol, ribitol, and L- and D-arabitol. The chain is L-xylo-3-hexulose reductase from Hypocrea jecorina (strain QM6a) (Trichoderma reesei).